The sequence spans 383 residues: Probable cell wall hydrolase LytN (383 aa).

The signal sequence occupies residues Met-1–Ala-49. In terms of domain architecture, LysM spans Gln-175–Val-219. A Peptidase C51 domain is found at Asn-241–Arg-378.

The protein resides in the secreted. Its function is as follows. Probably involved in peptidoglycan hydrolysis. The polypeptide is Probable cell wall hydrolase LytN (lytN) (Staphylococcus aureus (strain NCTC 8325 / PS 47)).